The sequence spans 279 residues: Protease HtpX homolog (279 aa).

Helical transmembrane passes span 6–26 (TVAL…MMGG) and 28–48 (GGAL…YWFS). His-127 serves as a coordination point for Zn(2+). Residue Glu-128 is part of the active site. Residue His-131 coordinates Zn(2+). 2 consecutive transmembrane segments (helical) span residues 137–157 (ILIG…AHMA) and 177–197 (LGLL…QMAI). A Zn(2+)-binding site is contributed by Glu-202.

Belongs to the peptidase M48B family. It depends on Zn(2+) as a cofactor.

It localises to the cell inner membrane. In Syntrophotalea carbinolica (strain DSM 2380 / NBRC 103641 / GraBd1) (Pelobacter carbinolicus), this protein is Protease HtpX homolog.